Consider the following 522-residue polypeptide: Gypsy retrotransposon integrase-like protein 1 (522 aa).

An Integrase catalytic domain is found at 135–292; it reads KVENPWSLVT…TPYFQMFSRN (158 aa). Position 502 is a phosphoserine (serine 502).

In terms of tissue distribution, widely expressed. Also found in tumors originating from parathyroid gland, colon, stomach, bladder, uterus and prostate.

This Homo sapiens (Human) protein is Gypsy retrotransposon integrase-like protein 1 (GIN1).